We begin with the raw amino-acid sequence, 162 residues long: Probable cytosine deaminase (162 aa).

Positions 8–132 (EKDLAYLREA…PLYINSRDIL (125 aa)) constitute a CMP/dCMP-type deaminase domain. Residue His-59 coordinates Zn(2+). Glu-61 (proton donor) is an active-site residue. Residues Cys-87 and Cys-90 each coordinate Zn(2+). Asp-159 serves as a coordination point for substrate.

This sequence belongs to the cytidine and deoxycytidylate deaminase family. Homodimer. The cofactor is Zn(2+).

The protein resides in the cytoplasm. The protein localises to the nucleus. It carries out the reaction cytosine + H2O + H(+) = uracil + NH4(+). The protein operates within pyrimidine metabolism; UMP biosynthesis via salvage pathway; uracil from cytosine: step 1/1. In terms of biological role, catalyzes the hydrolytic deamination of cytosine to uracil or 5-methylcytosine to thymine. Is involved in the pyrimidine salvage pathway, which allows the cell to utilize cytosine for pyrimidine nucleotide synthesis. This is Probable cytosine deaminase from Schizosaccharomyces pombe (strain 972 / ATCC 24843) (Fission yeast).